The following is a 170-amino-acid chain: MDRSQKAESVAFLNGVFAEAGAVVITRNLGMTVAQSTALRTKIREAGATYKVAKNSLAKLAVAGTDYEGLVDLFTGPTAIAASADPVAAAKAVVEFAKTTDKIEIVGGAMGSQVLNEAGVRALASMPSLDELRGTLIGLIQAPATKIAQLTTAPAAKLARVFGAYAKEAA.

This sequence belongs to the universal ribosomal protein uL10 family. As to quaternary structure, part of the ribosomal stalk of the 50S ribosomal subunit. The N-terminus interacts with L11 and the large rRNA to form the base of the stalk. The C-terminus forms an elongated spine to which L12 dimers bind in a sequential fashion forming a multimeric L10(L12)X complex.

Forms part of the ribosomal stalk, playing a central role in the interaction of the ribosome with GTP-bound translation factors. This Novosphingobium aromaticivorans (strain ATCC 700278 / DSM 12444 / CCUG 56034 / CIP 105152 / NBRC 16084 / F199) protein is Large ribosomal subunit protein uL10.